We begin with the raw amino-acid sequence, 363 residues long: MVVNFKIFKKASPNNMVTLYMNRREFVDSVTQVEPVDGIVVLDDEYIRQNRKIFVQLICNFRYGREDDEMIGLRFQKELILVSQPVYPEQKIDIQLTKMQERLLKKLGSNAYPFILEMPPSSPASVVLQQKANDSTQPCGVQYFVKVFAGENDCDRSHRRSTVNLGIRKVQYAPTKTGIQPCTVVRKDFLLSPGELELEVTLDRQLYYHGEKISINICVRNNSNKVVKKIKAMVQQGIDVVLFQNGQFRNTIAFAESSEGCPLNPGSSLQKIMYLVPNLAANCDRAGIAVEGDVKHKNTSLASTTLIASQEARDAFGIIVSYAVKVKLFLGALGGELCAELPFILMHPKPSLKAQPEAETEEA.

This sequence belongs to the arrestin family.

The chain is Phosrestin-2 (ARR1) from Calliphora vicina (Blue blowfly).